Here is a 483-residue protein sequence, read N- to C-terminus: Probable 4-hydroxyphenylacetate 3-monooxygenase (483 aa).

Residues 104 to 108 and histidine 150 each bind substrate; that span reads RSPDY. FAD is bound by residues 150-152, 156-159, and threonine 193; these read HTF and QVNR. 206-207 contacts substrate; it reads AP. Residue 452–455 participates in FAD binding; the sequence is DPIR.

Belongs to the FADH(2)-utilizing monooxygenase family.

It carries out the reaction 4-hydroxyphenylacetate + FADH2 + O2 = 3,4-dihydroxyphenylacetate + FAD + H2O + H(+). The protein operates within aromatic compound metabolism; 4-hydroxyphenylacetate degradation; pyruvate and succinate semialdehyde from 4-hydroxyphenylacetate: step 1/7. Its function is as follows. Catalyzes the hydroxylation of 4-hydroxyphenylacetic acid (4HPA), leading to the production of 3,4-dihydroxyphenylacetic acid (DHPA). This chain is Probable 4-hydroxyphenylacetate 3-monooxygenase (yoaI), found in Bacillus subtilis (strain 168).